A 384-amino-acid polypeptide reads, in one-letter code: MPTYNEITLAKELIRFPSITPIDAGVMKFLAKKLTTIGFKCKILEFKDKNSKPVKNLYARLGNTQPNFMFAGHLDVVPPGNIQDWTIKPFSPTIKKNHLIGRGANDMKSAIASWVVAVNNYVLTNKKINGSISLLITGDEEGVAINGTKKVVDYLKKKKEKIDFCLVGEPTNPNKLGEMIKIGRRGSINAELTIIGTQGHVAYPHRAKNPSTSLIKILNEIKEIKFDKGTKDFQPTNLEVTKININNTADNVIPGLARATFNIRFNNKHTSSSLKNRLNKIFKKITKKDKSNFKVEYRVSGEAFLTKPNKTTYMIQDVIKKITKIKPQLSTTGGTSDARFIRKIAPCLEFGLVGKTMHKVDEAVSISDLKKLTKIYSEILKNYF.

Histidine 73 is a Zn(2+) binding site. Residue aspartate 75 is part of the active site. Position 106 (aspartate 106) interacts with Zn(2+). Glutamate 140 functions as the Proton acceptor in the catalytic mechanism. Zn(2+)-binding residues include glutamate 141, glutamate 169, and histidine 358.

The protein belongs to the peptidase M20A family. DapE subfamily. Homodimer. It depends on Zn(2+) as a cofactor. Requires Co(2+) as cofactor.

It catalyses the reaction N-succinyl-(2S,6S)-2,6-diaminopimelate + H2O = (2S,6S)-2,6-diaminopimelate + succinate. The protein operates within amino-acid biosynthesis; L-lysine biosynthesis via DAP pathway; LL-2,6-diaminopimelate from (S)-tetrahydrodipicolinate (succinylase route): step 3/3. Functionally, catalyzes the hydrolysis of N-succinyl-L,L-diaminopimelic acid (SDAP), forming succinate and LL-2,6-diaminopimelate (DAP), an intermediate involved in the bacterial biosynthesis of lysine and meso-diaminopimelic acid, an essential component of bacterial cell walls. The sequence is that of Succinyl-diaminopimelate desuccinylase from Pelagibacter ubique (strain HTCC1062).